The following is a 118-amino-acid chain: MARIAGVNIPDNKHTVISLTYIYGVGRTTAQKICAETGVNPAAKIKDLSDEQIEQLRGEVAKFTTEGDLRREINMKIKRLMDLGCYRGLRHRRGLPVRGQRTKTNARTRKGPRKPIRK.

The segment at 93–118 (RGLPVRGQRTKTNARTRKGPRKPIRK) is disordered.

The protein belongs to the universal ribosomal protein uS13 family. In terms of assembly, part of the 30S ribosomal subunit. Forms a loose heterodimer with protein S19. Forms two bridges to the 50S subunit in the 70S ribosome.

In terms of biological role, located at the top of the head of the 30S subunit, it contacts several helices of the 16S rRNA. In the 70S ribosome it contacts the 23S rRNA (bridge B1a) and protein L5 of the 50S subunit (bridge B1b), connecting the 2 subunits; these bridges are implicated in subunit movement. Contacts the tRNAs in the A and P-sites. This is Small ribosomal subunit protein uS13 from Pseudomonas fluorescens (strain Pf0-1).